Consider the following 237-residue polypeptide: Ribonuclease PH (237 aa).

Phosphate is bound by residues R86 and G124 to R126.

It belongs to the RNase PH family. In terms of assembly, homohexameric ring arranged as a trimer of dimers.

The catalysed reaction is tRNA(n+1) + phosphate = tRNA(n) + a ribonucleoside 5'-diphosphate. In terms of biological role, phosphorolytic 3'-5' exoribonuclease that plays an important role in tRNA 3'-end maturation. Removes nucleotide residues following the 3'-CCA terminus of tRNAs; can also add nucleotides to the ends of RNA molecules by using nucleoside diphosphates as substrates, but this may not be physiologically important. Probably plays a role in initiation of 16S rRNA degradation (leading to ribosome degradation) during starvation. The sequence is that of Ribonuclease PH from Shewanella denitrificans (strain OS217 / ATCC BAA-1090 / DSM 15013).